Here is a 761-residue protein sequence, read N- to C-terminus: MSLWKRISSHVDCEQRMAAYYEEKGMLELRLCLAPWIEDRIMSEQITPNTTDQLERVALKFNEDLQQKLLSTRTASDQALKFRVVELCALIQRISAVELYTHLRSGLQKELQLVTEKSVAATAGQSMPLNPYNMNNTPMVTGYMVDPSDLLAVSNSCNPPVVQGIGPIHNVQNTGIASPALGMVTPKVELYEVQHQIMQSLNEFGNCANALKLLAQNYSYMLNSTSSPNAEAAYRSLIDEKAAIVLTMRRSFMYYESLHEMVIHELKNWRHQQAQAGNGAPFNEGSLDDIQRCFEMLESFIAHMLAAVKELMRVRLVTEEPELTHLLEQVQNAQKNLVCSAFIVDKQPPQVMKTNTRFAASVRWLIGSQLGIHNNPPTVECIIMSEIQSQRFVTRNTQMDNSSLSGQSSGEIQNASSTMEYQQNNHVFSASFRNMQLKKIKRAEKKGTESVMDEKFALFFYTTTTVNDFQIRVWTLSLPVVVIVHGNQEPQSWATITWDNAFAEIVRDPFMITDRVTWAQLSVALNIKFGSCTGRSLTIDNLDFLYEKLQREERSEYITWNQFCKEPMPDRSFTFWEWFFAIMKLTKDHMLGMWKAGCIMGFINKTKAQTDLLRSVYGIGTFLLRFSDSELGGVTIAYVNENGLVTMLAPWTARDFQVLNLADRIRDLDVLCWLHPSDRNASPVKRDVAFGEFYSKRQEPEPLVLDPVTGYVKSTLHVHVCRNGENGSTSGTPHHAQESMQLGNGDFGMADFDTITNFENF.

Residues 594 to 658 (WKAGCIMGFI…APWTARDFQV (65 aa)) enclose the SH2 domain. Phosphotyrosine; by JAK is present on tyrosine 711.

This sequence belongs to the transcription factor STAT family. In terms of assembly, forms a homodimer or a heterodimer with a related family member. Post-translationally, tyrosine phosphorylated by hopscotch. Phosphorylation is required for DNA-binding activity and dimerization.

The protein localises to the cytoplasm. It is found in the nucleus. In terms of biological role, might play a role in signal transduction and activation of transcription. Plays an important role in the segmental pattern formation in the early embryo by activating specific stripes of pair rule gene expression in early development as part of the Janus kinase-STAT pathway. Might play a role in male germline stem cell maintenance. In Drosophila melanogaster (Fruit fly), this protein is Signal transducer and transcription activator (Stat92E).